A 359-amino-acid chain; its full sequence is 3-dehydroquinate synthase (359 aa).

NAD(+) is bound by residues 71–76 (DGEQYK), 105–109 (GVIGD), 129–130 (TT), Lys-142, Lys-151, and 169–172 (CLST). The Zn(2+) site is built by Glu-184, His-247, and His-264.

This sequence belongs to the sugar phosphate cyclases superfamily. Dehydroquinate synthase family. Co(2+) serves as cofactor. It depends on Zn(2+) as a cofactor. NAD(+) is required as a cofactor.

The protein resides in the cytoplasm. It catalyses the reaction 7-phospho-2-dehydro-3-deoxy-D-arabino-heptonate = 3-dehydroquinate + phosphate. It participates in metabolic intermediate biosynthesis; chorismate biosynthesis; chorismate from D-erythrose 4-phosphate and phosphoenolpyruvate: step 2/7. In terms of biological role, catalyzes the conversion of 3-deoxy-D-arabino-heptulosonate 7-phosphate (DAHP) to dehydroquinate (DHQ). The polypeptide is 3-dehydroquinate synthase (Shewanella halifaxensis (strain HAW-EB4)).